Consider the following 198-residue polypeptide: Chitin synthase 2 (198 aa).

The protein belongs to the chitin synthase family. Class III subfamily.

It is found in the cell membrane. The enzyme catalyses [(1-&gt;4)-N-acetyl-beta-D-glucosaminyl](n) + UDP-N-acetyl-alpha-D-glucosamine = [(1-&gt;4)-N-acetyl-beta-D-glucosaminyl](n+1) + UDP + H(+). Polymerizes chitin, a structural polymer of the cell wall and septum, by transferring the sugar moiety of UDP-GlcNAc to the non-reducing end of the growing chitin polymer. The chain is Chitin synthase 2 (CHS2) from Rhinocladiella atrovirens.